The following is a 354-amino-acid chain: Guanine nucleotide-binding protein G(q) subunit alpha (354 aa).

2 S-palmitoyl cysteine lipidation sites follow: Cys-3 and Cys-4. A G-alpha domain is found at 32–354 (RELKLLLLGT…QLNLKEYNLV (323 aa)). Residues 35–48 (KLLLLGTGESGKST) are G1 motif. GTP-binding positions include 40 to 47 (GTGESGKS), 174 to 180 (LRVRVPT), 199 to 203 (DVGGQ), 269 to 272 (NKKD), and Ala-326. Mg(2+) is bound by residues Ser-47 and Thr-180. A G2 motif region spans residues 172–180 (DILRVRVPT). The tract at residues 195–204 (FRMVDVGGQR) is G3 motif. The tract at residues 265-272 (ILFLNKKD) is G4 motif. The tract at residues 324 to 329 (TCATDT) is G5 motif.

This sequence belongs to the G-alpha family. G(q) subfamily. As to quaternary structure, g proteins are composed of 3 units; alpha, beta and gamma. The alpha chain contains the guanine nucleotide binding site. In terms of tissue distribution, a high concentration was found in the retinal light-sensitive outer segment.

Its function is as follows. Guanine nucleotide-binding proteins (G proteins) are involved as modulators or transducers in various transmembrane signaling systems. Functionally, the G(q) alpha subunit is involved in the light-dependent activation of phospholipase C. The protein is Guanine nucleotide-binding protein G(q) subunit alpha of Loligo forbesii (Veined squid).